A 221-amino-acid polypeptide reads, in one-letter code: Hydrogenase expression/formation protein HupD (221 aa).

The Ni(2+) site is built by E20, D66, and H97.

The protein belongs to the peptidase A31 family.

In terms of biological role, not known. Could be involved in the processing of hydrogenase. This is Hydrogenase expression/formation protein HupD (hupD) from Thiocapsa roseopersicina.